The sequence spans 98 residues: NADH-ubiquinone oxidoreductase chain 4L (98 aa).

Transmembrane regions (helical) follow at residues 1-21 (MPIIYMNIMLAFTISLLGMLI), 29-49 (SLLCLEGMMLSLFIMNTLMAL), and 58-78 (IVPITLLVFAACEAAVGLALL).

This sequence belongs to the complex I subunit 4L family. As to quaternary structure, core subunit of respiratory chain NADH dehydrogenase (Complex I) which is composed of 45 different subunits.

The protein resides in the mitochondrion inner membrane. It carries out the reaction a ubiquinone + NADH + 5 H(+)(in) = a ubiquinol + NAD(+) + 4 H(+)(out). Functionally, core subunit of the mitochondrial membrane respiratory chain NADH dehydrogenase (Complex I) which catalyzes electron transfer from NADH through the respiratory chain, using ubiquinone as an electron acceptor. Part of the enzyme membrane arm which is embedded in the lipid bilayer and involved in proton translocation. In Colobus guereza (Mantled guereza), this protein is NADH-ubiquinone oxidoreductase chain 4L (MT-ND4L).